Here is a 72-residue protein sequence, read N- to C-terminus: Large ribosomal subunit protein uL29 (72 aa).

This sequence belongs to the universal ribosomal protein uL29 family.

This chain is Large ribosomal subunit protein uL29, found in Thermus thermophilus (strain ATCC BAA-163 / DSM 7039 / HB27).